Reading from the N-terminus, the 666-residue chain is Kinesin-like protein Nod (666 aa).

Residues 8-320 (AVRIAVREAP…LRFGTSAKKL (313 aa)) form the Kinesin motor domain. Residue 87–94 (GQTGTGKS) participates in ATP binding. Residues 423–450 (GFHSDSDKDRHLMPPPTGQEPRQASSQN) form a disordered region. A coiled-coil region spans residues 639 to 666 (ENLFQVKSLPIWSGNKWERFCQINCLDT).

This sequence belongs to the TRAFAC class myosin-kinesin ATPase superfamily. Kinesin family. As to expression, in adult female, found in meiotically active ovaries.

The protein localises to the cytoplasm. It is found in the cytoskeleton. In terms of biological role, required for the distributive chromosome segregation of non-exchange chromosomes during meiosis. May be a microtubule motor required to hold distributively 'paired' chromosomes at the metaphase plate until anaphase. The sequence is that of Kinesin-like protein Nod (nod) from Drosophila melanogaster (Fruit fly).